Here is a 386-residue protein sequence, read N- to C-terminus: G2/mitotic-specific cyclin-B2 (386 aa).

The interval 45–64 is disordered; it reads TNGKVGPSKKPSKASCAQKP.

Belongs to the cyclin family. Cyclin AB subfamily. In terms of assembly, interacts with the CDK1 protein kinase to form a serine/threonine kinase holoenzyme complex also known as maturation promoting factor (MPF). The cyclin subunit imparts substrate specificity to the complex.

Essential for the control of the cell cycle at the G2/M (mitosis) transition. The polypeptide is G2/mitotic-specific cyclin-B2 (ccnb2) (Oryzias luzonensis (Luzon ricefish)).